Reading from the N-terminus, the 448-residue chain is Asparagine--tRNA ligase (448 aa).

It belongs to the class-II aminoacyl-tRNA synthetase family. Homodimer.

The protein localises to the cytoplasm. It catalyses the reaction tRNA(Asn) + L-asparagine + ATP = L-asparaginyl-tRNA(Asn) + AMP + diphosphate + H(+). In Streptococcus pyogenes serotype M4 (strain MGAS10750), this protein is Asparagine--tRNA ligase.